A 106-amino-acid chain; its full sequence is Neisseria hypothetical transcription factor (106 aa).

The region spanning Met26–Leu80 is the HTH cro/C1-type domain. A DNA-binding region (H-T-H motif) is located at residues Gln37–Arg56.

Homodimer. Can interact with the dimeric form of the DNA mimic protein DMP19 with 1:1 stoichiometry.

It is found in the cytoplasm. Its activity is regulated as follows. Repressor activity is inhibited in the presence of the DNA mimic protein DMP19, which interacts with NHTF and prevents binding of NHTF to its DNA-binding sites. Transcriptional regulator probably involved in the response to nitrogen levels. Down-regulates its own expression as well as the expression of the downstream gene, glnD, which encodes the [Protein-PII] uridylyltransferase, a key enzyme in the nitrogen regulation system. Acts by binding to a specific palindromic DNA sequence (5'-TGTNANTNACA-3') in its 5'-untranslated region. This Neisseria meningitidis serogroup B (strain ATCC BAA-335 / MC58) protein is Neisseria hypothetical transcription factor.